Consider the following 207-residue polypeptide: Thiamine-phosphate synthase (207 aa).

Residues 36 to 40 (QLRMK) and N68 contribute to the 4-amino-2-methyl-5-(diphosphooxymethyl)pyrimidine site. The Mg(2+) site is built by D69 and D88. S106 is a 4-amino-2-methyl-5-(diphosphooxymethyl)pyrimidine binding site. A 2-[(2R,5Z)-2-carboxy-4-methylthiazol-5(2H)-ylidene]ethyl phosphate-binding site is contributed by 132 to 134 (TNT). K135 contributes to the 4-amino-2-methyl-5-(diphosphooxymethyl)pyrimidine binding site. 2-[(2R,5Z)-2-carboxy-4-methylthiazol-5(2H)-ylidene]ethyl phosphate contacts are provided by residues G162 and 182–183 (VS).

Belongs to the thiamine-phosphate synthase family. The cofactor is Mg(2+).

The catalysed reaction is 2-[(2R,5Z)-2-carboxy-4-methylthiazol-5(2H)-ylidene]ethyl phosphate + 4-amino-2-methyl-5-(diphosphooxymethyl)pyrimidine + 2 H(+) = thiamine phosphate + CO2 + diphosphate. It carries out the reaction 2-(2-carboxy-4-methylthiazol-5-yl)ethyl phosphate + 4-amino-2-methyl-5-(diphosphooxymethyl)pyrimidine + 2 H(+) = thiamine phosphate + CO2 + diphosphate. It catalyses the reaction 4-methyl-5-(2-phosphooxyethyl)-thiazole + 4-amino-2-methyl-5-(diphosphooxymethyl)pyrimidine + H(+) = thiamine phosphate + diphosphate. The protein operates within cofactor biosynthesis; thiamine diphosphate biosynthesis; thiamine phosphate from 4-amino-2-methyl-5-diphosphomethylpyrimidine and 4-methyl-5-(2-phosphoethyl)-thiazole: step 1/1. Its function is as follows. Condenses 4-methyl-5-(beta-hydroxyethyl)thiazole monophosphate (THZ-P) and 2-methyl-4-amino-5-hydroxymethyl pyrimidine pyrophosphate (HMP-PP) to form thiamine monophosphate (TMP). The sequence is that of Thiamine-phosphate synthase from Methanococcus maripaludis (strain C6 / ATCC BAA-1332).